A 497-amino-acid chain; its full sequence is RNA-splicing ligase RtcB homolog (497 aa).

Mn(2+)-binding residues include Asp111, Cys114, His219, His251, and His345. 218 to 222 (NHYAE) is a GMP binding site. Residues 345–346 (HN), 394–397 (GGTM), Ser401, 420–423 (HGAG), and Lys496 contribute to the GMP site. His420 serves as the catalytic GMP-histidine intermediate.

Belongs to the RtcB family. As to quaternary structure, catalytic component of the tRNA-splicing ligase complex. Mn(2+) serves as cofactor.

The catalysed reaction is a 3'-end 3'-phospho-ribonucleotide-RNA + a 5'-end dephospho-ribonucleoside-RNA + GTP = a ribonucleotidyl-ribonucleotide-RNA + GMP + diphosphate. It carries out the reaction a 3'-end 2',3'-cyclophospho-ribonucleotide-RNA + a 5'-end dephospho-ribonucleoside-RNA + GTP + H2O = a ribonucleotidyl-ribonucleotide-RNA + GMP + diphosphate + H(+). In terms of biological role, catalytic subunit of the tRNA-splicing ligase complex that acts by directly joining spliced tRNA halves to mature-sized tRNAs by incorporating the precursor-derived splice junction phosphate into the mature tRNA as a canonical 3',5'-phosphodiester. May act as an RNA ligase with broad substrate specificity, and may function toward other RNAs. The protein is RNA-splicing ligase RtcB homolog of Monosiga brevicollis (Choanoflagellate).